The following is a 289-amino-acid chain: Acetyl-coenzyme A carboxylase carboxyl transferase subunit beta (289 aa).

Positions 28-289 (VMTKCPKCKK…QGEGMAVWQN (262 aa)) constitute a CoA carboxyltransferase N-terminal domain. The Zn(2+) site is built by cysteine 32, cysteine 35, cysteine 51, and cysteine 54. The C4-type zinc-finger motif lies at 32 to 54 (CPKCKKIMYTKELLKNLKVCVNC).

The protein belongs to the AccD/PCCB family. In terms of assembly, acetyl-CoA carboxylase is a heterohexamer composed of biotin carboxyl carrier protein (AccB), biotin carboxylase (AccC) and two subunits each of ACCase subunit alpha (AccA) and ACCase subunit beta (AccD). Requires Zn(2+) as cofactor.

It localises to the cytoplasm. The enzyme catalyses N(6)-carboxybiotinyl-L-lysyl-[protein] + acetyl-CoA = N(6)-biotinyl-L-lysyl-[protein] + malonyl-CoA. It functions in the pathway lipid metabolism; malonyl-CoA biosynthesis; malonyl-CoA from acetyl-CoA: step 1/1. Its function is as follows. Component of the acetyl coenzyme A carboxylase (ACC) complex. Biotin carboxylase (BC) catalyzes the carboxylation of biotin on its carrier protein (BCCP) and then the CO(2) group is transferred by the transcarboxylase to acetyl-CoA to form malonyl-CoA. The chain is Acetyl-coenzyme A carboxylase carboxyl transferase subunit beta from Bacillus cytotoxicus (strain DSM 22905 / CIP 110041 / 391-98 / NVH 391-98).